Here is a 307-residue protein sequence, read N- to C-terminus: Haloalkane dehalogenase (307 aa).

The AB hydrolase-1 domain occupies 34–158; sequence PVLFLHGNPT…FQAFRTADVG (125 aa). The Nucleophile role is filled by Asp106. Glu130 (proton donor) is an active-site residue. The Proton acceptor role is filled by His272.

This sequence belongs to the haloalkane dehalogenase family. Type 2 subfamily. As to quaternary structure, monomer.

The catalysed reaction is 1-haloalkane + H2O = a halide anion + a primary alcohol + H(+). Its pathway is xenobiotic degradation; 1,2-dibromoethane degradation. Functionally, catalyzes hydrolytic cleavage of carbon-halogen bonds in halogenated aliphatic compounds, leading to the formation of the corresponding primary alcohols, halide ions and protons. Has a broad substrate specificity, which includes mono- and di-chlorinated and brominated alkanes. The highest activity was found with 1,2-dibromoethane, whereas low activity was measured with the analog 1,2-dichloroethane. The protein is Haloalkane dehalogenase (dhaAF) of Mycobacterium sp. (strain GP1).